The following is a 421-amino-acid chain: Testin (421 aa).

Residues Met-92 to Asp-199 enclose the PET domain. 3 LIM zinc-binding domains span residues Tyr-234–Glu-297, Pro-299–Val-359, and Gln-362–Ser-421.

This sequence belongs to the prickle / espinas / testin family. As to quaternary structure, interacts via LIM domain 1 with ZYX. Interacts (via LIM domain 3) with ENAH and VASP. Interacts with ALKBH4, talin, actin, alpha-actinin, GRIP1 and PXN. Interacts (via LIM domain 2) with ACTL7A (via N-terminus). Heterodimer with ACTL7A; the heterodimer interacts with ENAH to form a heterotrimer.

It localises to the cytoplasm. Its subcellular location is the cell junction. It is found in the focal adhesion. In terms of biological role, scaffold protein that may play a role in cell adhesion, cell spreading and in the reorganization of the actin cytoskeleton. Plays a role in the regulation of cell proliferation. May act as a tumor suppressor. The sequence is that of Testin (TES) from Loxodonta africana (African elephant).